We begin with the raw amino-acid sequence, 328 residues long: MIEKIWSGESPLWRLLLPLSWLYGLVSGAIRLCYKLKLKRAWRAPVPVVVVGNLTAGGNGKTPVVVWLVEQLQQRGIRVGVVSRGYGGKAESYPLLLSADTTTAQAGDEPVLIYQRTGAPVAVSPVRSDAVKAILAQHPDVQIIVTDDGLQHYRLARDVEIVVVDGVRRFGNGWWLPAGPMRERAGRLKSVDAVIVNGGVPRSGEIPMHLLPGQAVNLRTGMRCDVAQLEHVVAMAGIGHPPRFFATLKMCGVQPEKCVPLADHQSLNHADVSALVSAGQTLVMTEKDAVKCRAFAEENWWYLPVDAQLSGDEPAKLLAQLTSLASGN.

55–62 is a binding site for ATP; sequence TAGGNGKT.

Belongs to the LpxK family.

The catalysed reaction is a lipid A disaccharide + ATP = a lipid IVA + ADP + H(+). It functions in the pathway glycolipid biosynthesis; lipid IV(A) biosynthesis; lipid IV(A) from (3R)-3-hydroxytetradecanoyl-[acyl-carrier-protein] and UDP-N-acetyl-alpha-D-glucosamine: step 6/6. Its function is as follows. Transfers the gamma-phosphate of ATP to the 4'-position of a tetraacyldisaccharide 1-phosphate intermediate (termed DS-1-P) to form tetraacyldisaccharide 1,4'-bis-phosphate (lipid IVA). This Escherichia coli O17:K52:H18 (strain UMN026 / ExPEC) protein is Tetraacyldisaccharide 4'-kinase.